The sequence spans 91 residues: Small ribosomal subunit protein uS15 (91 aa).

Belongs to the universal ribosomal protein uS15 family. Part of the 30S ribosomal subunit. Forms a bridge to the 50S subunit in the 70S ribosome, contacting the 23S rRNA.

In terms of biological role, one of the primary rRNA binding proteins, it binds directly to 16S rRNA where it helps nucleate assembly of the platform of the 30S subunit by binding and bridging several RNA helices of the 16S rRNA. Functionally, forms an intersubunit bridge (bridge B4) with the 23S rRNA of the 50S subunit in the ribosome. The sequence is that of Small ribosomal subunit protein uS15 from Rickettsia prowazekii (strain Madrid E).